The chain runs to 386 residues: Hemagglutinin-esterase (386 aa).

The signal sequence occupies residues Met-1–Cys-11. The tract at residues Met-1 to Val-121 is esterase domain 1. The Virion surface segment spans residues Tyr-12–Ile-359. Ser-34 acts as the Nucleophile in catalysis. Cysteines 38 and 59 form a disulfide. N-linked (GlcNAc...) asparagine; by host glycosylation is found at Asn-83, Asn-110, Asn-145, and Asn-168. Cys-107 and Cys-154 are disulfide-bonded. The tract at residues Arg-122–Pro-236 is receptor binding. Intrachain disulfides connect Cys-180/Cys-246, Cys-188/Cys-219, and Cys-277/Cys-282. An esterase domain 2 region spans residues Phe-237 to His-349. Asn-286 is a glycosylation site (N-linked (GlcNAc...) asparagine; by host). Residues Asp-296 and His-299 each act as charge relay system in the active site. Cysteines 317 and 341 form a disulfide. Asn-328 is a glycosylation site (N-linked (GlcNAc...) asparagine; by host). A helical transmembrane segment spans residues Ile-360–Leu-380. The Intravirion portion of the chain corresponds to Tyr-381–His-386.

This sequence belongs to the influenza type C/coronaviruses hemagglutinin-esterase family. In terms of assembly, homodimer; disulfide-linked. Forms a complex with the M protein in the pre-Golgi. Associates then with S-M complex to form a ternary complex S-M-HE. N-glycosylated in the host RER.

The protein resides in the virion membrane. The protein localises to the host cell membrane. It catalyses the reaction N-acetyl-9-O-acetylneuraminate + H2O = N-acetylneuraminate + acetate + H(+). It carries out the reaction N-acetyl-4-O-acetylneuraminate + H2O = N-acetylneuraminate + acetate + H(+). Functionally, structural protein that makes short spikes at the surface of the virus. Contains receptor binding and receptor-destroying activities. Mediates de-O-acetylation of N-acetyl-4-O-acetylneuraminic acid, which is probably the receptor determinant recognized by the virus on the surface of erythrocytes and susceptible cells. This receptor-destroying activity is important for virus release as it probably helps preventing self-aggregation and ensures the efficient spread of the progeny virus from cell to cell. May serve as a secondary viral attachment protein for initiating infection, the spike protein being the major one. May become a target for both the humoral and the cellular branches of the immune system. The sequence is that of Hemagglutinin-esterase from Homo sapiens (Human).